A 221-amino-acid chain; its full sequence is MALPNQQTVDYPSFKLVIVGDGGTGKTTFVKRHLTGEFEKKYEPTIGVEVHPLDFFTNCGKIRFYCWDTAGQEKFGGLRDGYYIHGQCAIIMFDVTARLTYKNVPTWHRDLCRVCENIPIVLCGNKVDVKNRQVKAKQVTFHRKKNLQYYEISAKSNYNFEKPFLYLARKLAGDQNLHFVESPALAPPEVHLDIAAQQQNEADLAAAAAQPLPDDDDDAFE.

A Small GTPase Ran-type domain is found at 10 to 174 (DYPSFKLVIV…LYLARKLAGD (165 aa)). 21 to 28 (DGGTGKTT) contributes to the GTP binding site. The segment at 40–48 (KKYEPTIGV) is switch-I. Residues G71, 125-128 (NKVD), and 153-155 (SAK) contribute to the GTP site. The switch-II stretch occupies residues 71–87 (GQEKFGGLRDGYYIHGQ). Residues 202-212 (ADLAAAAAQPL) are compositionally biased toward low complexity. The segment at 202 to 221 (ADLAAAAAQPLPDDDDDAFE) is disordered.

It belongs to the small GTPase superfamily. Ran family. In terms of assembly, found in a nuclear export complex with RanGTP, exportin and pre-miRNA. Interacts with RanBP1a and RanBP1b. Interacts with PHRIP1. Interacts with KPNB1. Binds to PHIP1.

Its subcellular location is the nucleus. It localises to the nucleus envelope. Functionally, GTP-binding protein involved in nucleocytoplasmic transport. Required for the import of protein into the nucleus and also for RNA export. Involved in chromatin condensation and control of cell cycle. The protein is GTP-binding nuclear protein Ran-2 of Arabidopsis thaliana (Mouse-ear cress).